Reading from the N-terminus, the 144-residue chain is Large ribosomal subunit protein uL15 (144 aa).

The tract at residues 1 to 57 (MKLNDLSPAPGSRREKHRPGRGIGSGLGKTGGRGHKGQTSRSGGSIAPGFEGGQQPL) is disordered. The span at 21–31 (RGIGSGLGKTG) shows a compositional bias: gly residues.

The protein belongs to the universal ribosomal protein uL15 family. In terms of assembly, part of the 50S ribosomal subunit.

Binds to the 23S rRNA. This chain is Large ribosomal subunit protein uL15, found in Pseudomonas entomophila (strain L48).